The sequence spans 138 residues: Transcription antitermination protein NusB (138 aa).

Belongs to the NusB family.

Functionally, involved in transcription antitermination. Required for transcription of ribosomal RNA (rRNA) genes. Binds specifically to the boxA antiterminator sequence of the ribosomal RNA (rrn) operons. The sequence is that of Transcription antitermination protein NusB from Photorhabdus laumondii subsp. laumondii (strain DSM 15139 / CIP 105565 / TT01) (Photorhabdus luminescens subsp. laumondii).